Here is a 560-residue protein sequence, read N- to C-terminus: Formate--tetrahydrofolate ligase (560 aa).

69–76 (TPAGEGKS) provides a ligand contact to ATP.

This sequence belongs to the formate--tetrahydrofolate ligase family.

The enzyme catalyses (6S)-5,6,7,8-tetrahydrofolate + formate + ATP = (6R)-10-formyltetrahydrofolate + ADP + phosphate. The protein operates within one-carbon metabolism; tetrahydrofolate interconversion. The sequence is that of Formate--tetrahydrofolate ligase from Listeria welshimeri serovar 6b (strain ATCC 35897 / DSM 20650 / CCUG 15529 / CIP 8149 / NCTC 11857 / SLCC 5334 / V8).